The sequence spans 33 residues: Omega-conotoxin-like Vn2 (33 aa).

Intrachain disulfides connect Cys3-Cys20, Cys10-Cys24, and Cys19-Cys28. The residue at position 33 (Pro33) is a Proline amide.

Expressed by the venom duct.

The protein localises to the secreted. Functionally, omega-conotoxins act at presynaptic membranes, they bind and block voltage-gated calcium channels (Cav). Has strong insecticidal properties at a dose of only 100 pmol/g of body weight (when injected into the haemocoel of the wax moth G.mellonella larvae). Provoques tremor and uncontrolled movements in insect larvae, that are typical symptoms caused by neurotoxins. On fish G.niger, intraperitoneal injection of the toxin causes full extension of the fins, change in posture, breathing difficulties (at 30 and 100 pmol/g body weight) and death (at 100 pmol/g body weight). This Conus ventricosus (Mediterranean cone) protein is Omega-conotoxin-like Vn2.